An 88-amino-acid chain; its full sequence is Small ribosomal subunit protein bS16c (88 aa).

It belongs to the bacterial ribosomal protein bS16 family.

It localises to the plastid. It is found in the chloroplast. In Atropa belladonna (Belladonna), this protein is Small ribosomal subunit protein bS16c.